The primary structure comprises 86 residues: RNA-binding protein Hfq (86 aa).

Positions 12–73 (DIFLNQVRKE…ISTITPQKPV (62 aa)) constitute a Sm domain.

Belongs to the Hfq family. As to quaternary structure, homohexamer.

In terms of biological role, RNA chaperone that binds small regulatory RNA (sRNAs) and mRNAs to facilitate mRNA translational regulation in response to envelope stress, environmental stress and changes in metabolite concentrations. Also binds with high specificity to tRNAs. The protein is RNA-binding protein Hfq of Thermoanaerobacter pseudethanolicus (strain ATCC 33223 / 39E) (Clostridium thermohydrosulfuricum).